Consider the following 482-residue polypeptide: Alanine aminotransferase 2 (482 aa).

Residue Lys-299 is modified to N6-(pyridoxal phosphate)lysine.

It belongs to the class-I pyridoxal-phosphate-dependent aminotransferase family. Alanine aminotransferase subfamily. Homodimer. Pyridoxal 5'-phosphate serves as cofactor.

It catalyses the reaction L-alanine + 2-oxoglutarate = pyruvate + L-glutamate. It functions in the pathway photosynthesis; C4 acid pathway. The protein operates within amino-acid degradation; L-alanine degradation via transaminase pathway; pyruvate from L-alanine: step 1/1. Functionally, transfer of C3 units between the cytosol of mesophyll and bundle sheath cells to maintain a nitrogen-carbon balance in the C4-dicarboxylic pathway. This is Alanine aminotransferase 2 from Hordeum vulgare (Barley).